We begin with the raw amino-acid sequence, 1238 residues long: Chitin synthase 4 (1238 aa).

2 disordered regions span residues 1 to 93 (MAEP…PERN) and 132 to 190 (TVSS…RRQK). The span at 14–34 (TRDKSHSPYRESPSRRLRDVE) shows a compositional bias: basic and acidic residues. Asn-50 carries N-linked (GlcNAc...) asparagine glycosylation. 2 stretches are compositionally biased toward polar residues: residues 71-80 (SNPNPMSQSD) and 133-142 (VSSGSTQQDT). Basic and acidic residues predominate over residues 175-190 (RKDTRNLTEEEKRRQK). Asn-180 carries an N-linked (GlcNAc...) asparagine glycan. 2 consecutive transmembrane segments (helical) span residues 200–220 (IWNI…LQCF) and 235–255 (VGLI…TFGF). N-linked (GlcNAc...) asparagine glycosylation is found at Asn-365, Asn-404, and Asn-426. The chain crosses the membrane as a helical span at residues 487–507 (VVLYVSLVFILAIVAAKFFLA). Disordered stretches follow at residues 548-570 (PKIT…RGSM) and 582-606 (YAVD…AKLL). A compositionally biased stretch (polar residues) spans 553-562 (PASTVTGSDG). Asn-617, Asn-903, and Asn-1030 each carry an N-linked (GlcNAc...) asparagine glycan. 3 helical membrane-spanning segments follow: residues 1062-1082 (IGTL…ILSI), 1087-1107 (VPVI…ILIV), and 1115-1135 (YILW…VLPA).

Belongs to the chitin synthase family. Class IV subfamily. Post-translationally, maximal activity requires trypsin activation, suggesting a zymogenic nature.

The protein localises to the cell membrane. The catalysed reaction is [(1-&gt;4)-N-acetyl-beta-D-glucosaminyl](n) + UDP-N-acetyl-alpha-D-glucosamine = [(1-&gt;4)-N-acetyl-beta-D-glucosaminyl](n+1) + UDP + H(+). Its activity is regulated as follows. Activity is stimulated by Mg(2+), and is more inhibited by polyoxin D than by nikkomycin. Polymerizes chitin, a structural polymer of the cell wall and septum, by transferring the sugar moiety of UDP-GlcNAc to the non-reducing end of the growing chitin polymer. CHS4 synthesizes a large amount of chitin and appears to play a role in the process of cell separation. CHS4 is particularly well suited for functioning at the higher temperatures associated with its poorly characterized saprophic environment and with human infection. This chain is Chitin synthase 4, found in Exophiala dermatitidis (Black yeast-like fungus).